We begin with the raw amino-acid sequence, 285 residues long: Probable endonuclease 4 (285 aa).

The Zn(2+) site is built by His-69, His-109, Glu-145, Asp-179, His-182, His-216, Asp-229, His-231, and Glu-261.

It belongs to the AP endonuclease 2 family. It depends on Zn(2+) as a cofactor.

It catalyses the reaction Endonucleolytic cleavage to 5'-phosphooligonucleotide end-products.. Endonuclease IV plays a role in DNA repair. It cleaves phosphodiester bonds at apurinic or apyrimidinic (AP) sites, generating a 3'-hydroxyl group and a 5'-terminal sugar phosphate. The sequence is that of Probable endonuclease 4 from Escherichia coli O1:K1 / APEC.